Reading from the N-terminus, the 374-residue chain is Carboxypeptidase O (374 aa).

The first 20 residues, 1–20 (MKPLLETLYLLGMLVPGGLG), serve as a signal peptide directing secretion. The 296-residue stretch at 49–344 (IYHPMGEIYE…EAVLSVLDDV (296 aa)) folds into the Peptidase M14 domain. Residues His108 and Glu111 each coordinate Zn(2+). N-linked (GlcNAc...) asparagine glycosylation is found at Asn132, Asn174, and Asn187. His236 is a binding site for Zn(2+). An N-linked (GlcNAc...) asparagine glycan is attached at Asn251. Residue Glu310 is the Proton donor/acceptor of the active site. Residue Asp352 is the site of GPI-anchor amidated aspartate attachment. A propeptide spans 353 to 374 (SAGRVTSATMLLGLLVSCMSLL) (removed in mature form).

Belongs to the peptidase M14 family. Zn(2+) is required as a cofactor. In terms of processing, N-glycosylated. As to expression, detected in enterocytes of the ileum.

Its subcellular location is the apical cell membrane. Strongly inhibited by potato carboxypeptidase inhibitor, and the chelating agents EDTA and 1,10-phenanthroline. Also inhibited by compounds with multiple carboxylic acid groups such as citrate and succinate, and to a lesser exent the amino acids aspartate and glutamate. Not significantly inhibited by benzylsuccinic acid. In terms of biological role, carboxypeptidase which preferentially cleaves C-terminal acidic residues from peptides and proteins. Can also cleave C-terminal hydrophobic amino acids, with a preference for small residues over large residues. This chain is Carboxypeptidase O, found in Homo sapiens (Human).